Here is a 125-residue protein sequence, read N- to C-terminus: Protein ApaG (125 aa).

The 123-residue stretch at 3–125 folds into the ApaG domain; it reads TAVTEGIEVT…FPLVVPGTLN (123 aa).

The polypeptide is Protein ApaG (Anaeromyxobacter sp. (strain K)).